The following is a 517-amino-acid chain: Bifunctional purine biosynthesis protein PurH (517 aa).

The MGS-like domain maps to 1 to 146 (MAPIALLSVS…KNHAHVAVLT (146 aa)).

This sequence belongs to the PurH family.

It catalyses the reaction (6R)-10-formyltetrahydrofolate + 5-amino-1-(5-phospho-beta-D-ribosyl)imidazole-4-carboxamide = 5-formamido-1-(5-phospho-D-ribosyl)imidazole-4-carboxamide + (6S)-5,6,7,8-tetrahydrofolate. The enzyme catalyses IMP + H2O = 5-formamido-1-(5-phospho-D-ribosyl)imidazole-4-carboxamide. The protein operates within purine metabolism; IMP biosynthesis via de novo pathway; 5-formamido-1-(5-phospho-D-ribosyl)imidazole-4-carboxamide from 5-amino-1-(5-phospho-D-ribosyl)imidazole-4-carboxamide (10-formyl THF route): step 1/1. It functions in the pathway purine metabolism; IMP biosynthesis via de novo pathway; IMP from 5-formamido-1-(5-phospho-D-ribosyl)imidazole-4-carboxamide: step 1/1. This Prochlorococcus marinus (strain MIT 9313) protein is Bifunctional purine biosynthesis protein PurH.